A 153-amino-acid polypeptide reads, in one-letter code: Ribosome maturation factor RimP (153 aa).

It belongs to the RimP family.

The protein resides in the cytoplasm. Functionally, required for maturation of 30S ribosomal subunits. This is Ribosome maturation factor RimP from Acidithiobacillus ferrooxidans (strain ATCC 53993 / BNL-5-31) (Leptospirillum ferrooxidans (ATCC 53993)).